Consider the following 201-residue polypeptide: Probable GTP-binding protein EngB (201 aa).

Residues 22-197 (TFPEYAFIGR…LNYIESINKE (176 aa)) form the EngB-type G domain. GTP-binding positions include 30–37 (GRSNVGKS), 57–61 (GKTML), 75–78 (DLPG), 142–145 (TKAD), and 175–178 (ITSS). The Mg(2+) site is built by Ser37 and Thr59.

The protein belongs to the TRAFAC class TrmE-Era-EngA-EngB-Septin-like GTPase superfamily. EngB GTPase family. Mg(2+) serves as cofactor.

In terms of biological role, necessary for normal cell division and for the maintenance of normal septation. The chain is Probable GTP-binding protein EngB from Bacteroides fragilis (strain ATCC 25285 / DSM 2151 / CCUG 4856 / JCM 11019 / LMG 10263 / NCTC 9343 / Onslow / VPI 2553 / EN-2).